A 349-amino-acid polypeptide reads, in one-letter code: N-acetyltaurine hydrolase (349 aa).

Residues histidine 26, histidine 28, glutamate 169, histidine 201, histidine 230, and aspartate 298 each coordinate a divalent metal cation.

The protein belongs to the metallo-dependent hydrolases superfamily. Phosphotriesterase family. A divalent metal cation serves as cofactor. As to expression, expressed in the kidney, liver and brainstem.

It is found in the cytoplasm. Its subcellular location is the cytosol. The catalysed reaction is N-acetyltaurine + H2O = taurine + acetate. It catalyses the reaction N-propanoyltaurine + H2O = propanoate + taurine. It carries out the reaction N-acetyl-L-methionine + H2O = L-methionine + acetate. The enzyme catalyses N-acetyl-L-isoleucine + H2O = L-isoleucine + acetate. The catalysed reaction is N-acetyl-L-leucine + H2O = L-leucine + acetate. It catalyses the reaction N-acetyl-L-valine + H2O = L-valine + acetate. N-acetyltaurine hydrolase that regulates feeding by catalyzing the hydrolysis of N-acetyltaurine into taurine and acetate. N-acetyltaurine has anorexigenic and anti-obesity effects that are dependent on GFRAL receptor and GDF15. PTER also acts on other N-acetyl amino acids (Met, Ile, Leu, Val) and N-propionyltaurine, but at lower rates. The polypeptide is N-acetyltaurine hydrolase (Mus musculus (Mouse)).